The chain runs to 446 residues: Enolase (446 aa).

Residues His-164 and Glu-173 each coordinate substrate. Glu-216 functions as the Proton donor in the catalytic mechanism. 3 residues coordinate Mg(2+): Asp-251, Glu-302, and Asp-329. Substrate-binding residues include Glu-302 and Asp-329. The Proton acceptor role is filled by Lys-354. Substrate contacts are provided by residues 381–384 (SHRS) and Lys-405.

It belongs to the enolase family. As to quaternary structure, homodimer. Requires Mg(2+) as cofactor.

Its subcellular location is the cytoplasm. The enzyme catalyses (2R)-2-phosphoglycerate = phosphoenolpyruvate + H2O. Its pathway is carbohydrate degradation; glycolysis; pyruvate from D-glyceraldehyde 3-phosphate: step 4/5. This chain is Enolase (ENO1), found in Oryza sativa subsp. japonica (Rice).